Consider the following 135-residue polypeptide: Small ribosomal subunit protein bS16 (135 aa).

A compositionally biased stretch (basic and acidic residues) spans 105–120 (DEKKKPVLKPKTEKAA). A disordered region spans residues 105 to 135 (DEKKKPVLKPKTEKAAPEAAAPEAEATEEQA).

The protein belongs to the bacterial ribosomal protein bS16 family.

The chain is Small ribosomal subunit protein bS16 from Clavibacter sepedonicus (Clavibacter michiganensis subsp. sepedonicus).